Reading from the N-terminus, the 683-residue chain is DNA ligase (683 aa).

NAD(+) is bound by residues 42 to 46 (DAEYD), 91 to 92 (SL), and E122. K124 acts as the N6-AMP-lysine intermediate in catalysis. Residues R145, E182, K299, and K323 each coordinate NAD(+). Zn(2+) is bound by residues C417, C420, C435, and C441. The BRCT domain occupies 602-683 (APQGVLAGKT…MRKLLEGQTT (82 aa)).

It belongs to the NAD-dependent DNA ligase family. LigA subfamily. Mg(2+) is required as a cofactor. Requires Mn(2+) as cofactor.

It catalyses the reaction NAD(+) + (deoxyribonucleotide)n-3'-hydroxyl + 5'-phospho-(deoxyribonucleotide)m = (deoxyribonucleotide)n+m + AMP + beta-nicotinamide D-nucleotide.. In terms of biological role, DNA ligase that catalyzes the formation of phosphodiester linkages between 5'-phosphoryl and 3'-hydroxyl groups in double-stranded DNA using NAD as a coenzyme and as the energy source for the reaction. It is essential for DNA replication and repair of damaged DNA. The sequence is that of DNA ligase from Paraburkholderia phymatum (strain DSM 17167 / CIP 108236 / LMG 21445 / STM815) (Burkholderia phymatum).